The primary structure comprises 420 residues: UDP-N-acetyl-D-mannosamine dehydrogenase (420 aa).

5 residues coordinate NAD(+): tyrosine 13, isoleucine 14, aspartate 33, threonine 85, and threonine 126. UDP-N-acetyl-alpha-D-mannosaminouronate is bound by residues arginine 160, valine 161, lysine 212, asparagine 216, arginine 219, histidine 250, arginine 252, and glycine 263. The active-site Proton donor/acceptor is the lysine 212. The active-site Nucleophile is the cysteine 266. 2 residues coordinate UDP-N-acetyl-alpha-D-mannosaminouronate: phenylalanine 330 and lysine 331. Arginine 338 contributes to the NAD(+) binding site. Residue lysine 416 participates in UDP-N-acetyl-alpha-D-mannosaminouronate binding.

The protein belongs to the UDP-glucose/GDP-mannose dehydrogenase family. WecC subfamily. As to quaternary structure, homodimer.

It catalyses the reaction UDP-N-acetyl-alpha-D-mannosamine + 2 NAD(+) + H2O = UDP-N-acetyl-alpha-D-mannosaminouronate + 2 NADH + 3 H(+). It participates in bacterial outer membrane biogenesis; enterobacterial common antigen biosynthesis. In terms of biological role, catalyzes the four-electron oxidation of UDP-N-acetyl-D-mannosamine (UDP-ManNAc), reducing NAD(+) and releasing UDP-N-acetylmannosaminuronic acid (UDP-ManNAcA). This chain is UDP-N-acetyl-D-mannosamine dehydrogenase, found in Shigella flexneri.